A 1873-amino-acid polypeptide reads, in one-letter code: SAGA complex subunit Spt20 (1873 aa).

Belongs to the SPT20 family. Component of the Spt-Ada-Gcn5 acetyltransferase (SAGA) complex consisting of wda/Taf5L, Saf6, Taf9, Taf10b, Taf12, Ada1, Spt3, Spt7, Spt20, Sf3b3, Sf3b5, Nipped-A/Tra1, a histone acetyltransferase (HAT) module made up of Gcn5, Ada2b (Isoform B), Ada3 and Sgf29, and a deubiquitinase (DUB) module made up of not/nonstop, Sgf11 and e(y)2 tethered to SAGA by Atxn7.

It is found in the nucleus. Functionally, component of the transcription regulatory complex SAGA, a multiprotein complex that activates transcription by remodeling chromatin and mediating histone acetylation and deubiquitination. The SAGA complex predominantly acetylates histone H3. This Drosophila melanogaster (Fruit fly) protein is SAGA complex subunit Spt20.